The chain runs to 365 residues: Putative F-box protein At1g31000 (365 aa).

One can recognise an F-box domain in the interval 15-62 (NDSDSVRIDIVIEIVKRLPLKDVSRFLLVSKLWSEIIRSPYFIRSFPF).

This Arabidopsis thaliana (Mouse-ear cress) protein is Putative F-box protein At1g31000.